The sequence spans 315 residues: Putative serine/threonine-protein phosphatase PP2A-4 catalytic subunit (315 aa).

Residues Asp-63, His-65, Asp-91, and Asn-123 each contribute to the Mn(2+) site. The active-site Proton donor is the His-124. Residues His-173 and His-247 each contribute to the Mn(2+) site.

The protein belongs to the PPP phosphatase family. PP-2A subfamily. It depends on Mn(2+) as a cofactor.

Its subcellular location is the cytoplasm. The catalysed reaction is O-phospho-L-seryl-[protein] + H2O = L-seryl-[protein] + phosphate. It catalyses the reaction O-phospho-L-threonyl-[protein] + H2O = L-threonyl-[protein] + phosphate. The protein is Putative serine/threonine-protein phosphatase PP2A-4 catalytic subunit (PP2A4) of Oryza sativa subsp. indica (Rice).